The following is a 321-amino-acid chain: Mas-related G-protein coupled receptor member B4 (321 aa).

Over Met1–Asn33 the chain is Extracellular. 2 N-linked (GlcNAc...) asparagine glycosylation sites follow: Asn11 and Asn16. The chain crosses the membrane as a helical span at residues Phe34–Leu54. Residues Ala55 to Ala62 are Cytoplasmic-facing. The helical transmembrane segment at Phe63–Val83 threads the bilayer. Residues His84 to Phe97 lie on the Extracellular side of the membrane. Asn94 is a glycosylation site (N-linked (GlcNAc...) asparagine). The chain crosses the membrane as a helical span at residues Tyr98 to Ile118. The Cytoplasmic portion of the chain corresponds to Ser119–Ala146. A helical transmembrane segment spans residues Leu147–Phe167. Residues Ser168–Tyr172 are Extracellular-facing. A helical transmembrane segment spans residues Tyr173–Leu193. The Cytoplasmic segment spans residues Ser194–Arg215. A helical transmembrane segment spans residues Phe216 to Ile236. Residues Cys237–Glu257 lie on the Extracellular side of the membrane. Residues Ile258 to Gly278 form a helical membrane-spanning segment. The Cytoplasmic portion of the chain corresponds to Ser279 to Val321. Residues Gln299 to Val321 are disordered.

Belongs to the G-protein coupled receptor 1 family. Mas subfamily.

It localises to the membrane. Orphan receptor. Probably involved in the function of nociceptive neurons. May regulate nociceptor function and/or development, including the sensation or modulation of pain. The protein is Mas-related G-protein coupled receptor member B4 (Mrgprb4) of Mus musculus (Mouse).